Consider the following 1588-residue polypeptide: Paternally-expressed gene 3 protein (1588 aa).

Residues 46–128 (HQRFRNLIYV…TLLENYKEMY (83 aa)) enclose the SCAN box domain. Disordered regions lie at residues 128-231 (YQPE…YQNV), 265-304 (GHSH…RRGI), and 317-347 (KFIK…MSDD). A compositionally biased stretch (acidic residues) spans 129–142 (QPEDDNNSDVTSDD). Composition is skewed to basic and acidic residues over residues 143 to 152 (DMTRNRRESS), 160 to 181 (FSDR…DRWS), 205 to 224 (FEMD…RSQD), and 293 to 304 (PEAKKSTHRRGI). 3 C2H2-type zinc fingers span residues 452 to 474 (YVCD…QIMH), 505 to 527 (FECK…RKIH), and 563 to 585 (YECR…QKIH). The span at 588-607 (DDKDNEREHERERERERGET) shows a compositional bias: basic and acidic residues. Residues 588–608 (DDKDNEREHERERERERGETF) form a disordered region. The C2H2-type 4 zinc-finger motif lies at 627–649 (YECKVCGETFLHSSSLKEHQKIH). Disordered stretches follow at residues 839–889 (VASK…SKNR) and 905–929 (QKSV…SSNV). A compositionally biased stretch (basic and acidic residues) spans 868 to 881 (LNDKRQKIPARENP). The C2H2-type 5 zinc finger occupies 969–991 (YECQECGECFAHSSDLTEHQKIH). The disordered stretch occupies residues 1056 to 1104 (EKSHGEESQGENTDGEETHSEETHGQETIEDPVIQGSDMEDPQKDDPDD). The span at 1071–1082 (EETHSEETHGQE) shows a compositional bias: basic and acidic residues. C2H2-type zinc fingers lie at residues 1107 to 1129 (YECE…QKVH), 1163 to 1185 (YECP…QRIH), 1225 to 1247 (IRCL…MRLH), 1282 to 1304 (FECA…VTVH), and 1332 to 1354 (YECK…KELH). The span at 1396-1415 (EPEVEAAEPEVEAAEPEVEA) shows a compositional bias: acidic residues. The disordered stretch occupies residues 1396–1495 (EPEVEAAEPE…GIEDPEEGED (100 aa)). 7 repeat units span residues 1397-1403 (PEVEAAE), 1404-1410 (PEVEAAE), 1411-1417 (PEVEAAE), 1418-1422 (PNGEA), 1425-1429 (PDGEA), 1432-1436 (PIGEA), and 1439-1443 (PNGEA). The interval 1397 to 1417 (PEVEAAEPEVEAAEPEVEAAE) is 3 X 7 AA repeat of P-E-V-E-A-A-E. The interval 1418-1443 (PNGEAEGPDGEAAEPIGEAGQPNGEA) is 4 X 5 AA repeat of P-X-G-E-A. Composition is skewed to acidic residues over residues 1449–1466 (DADE…ERAE) and 1475–1495 (PEGD…EGED). C2H2-type zinc fingers lie at residues 1505–1527 (YDCH…LKTH) and 1564–1586 (FKCD…QNTH).

Belongs to the krueppel C2H2-type zinc-finger protein family. Homodimer. Interacts with SIAH1A and SIAH2. Interacts with TRAF2. In terms of tissue distribution, brain, glial cells, astrocytes, embryo, placenta, testis, ovary and uterus. In the placenta it is found in the layer of villous cytotrophoblast cells while in the ovary it is found in the cells of the ovarian stroma including the thecal layers around the follicles. Expression is highly repressed in glioma cell lines.

The protein localises to the nucleus. Its subcellular location is the cytoplasm. Functionally, induces apoptosis in cooperation with SIAH1A. Acts as a mediator between p53/TP53 and BAX in a neuronal death pathway that is activated by DNA damage. Acts synergistically with TRAF2 and inhibits TNF induced apoptosis through activation of NF-kappa-B. Possesses a tumor suppressing activity in glioma cells. This Homo sapiens (Human) protein is Paternally-expressed gene 3 protein (PEG3).